The sequence spans 274 residues: 3-methyl-2-oxobutanoate hydroxymethyltransferase (274 aa).

Asp-46 and Asp-85 together coordinate Mg(2+). Residues 46–47 (DS), Asp-85, and Lys-114 each bind 3-methyl-2-oxobutanoate. Glu-116 serves as a coordination point for Mg(2+). The Proton acceptor role is filled by Glu-183.

Belongs to the PanB family. As to quaternary structure, homodecamer; pentamer of dimers. Requires Mg(2+) as cofactor.

It localises to the cytoplasm. It carries out the reaction 3-methyl-2-oxobutanoate + (6R)-5,10-methylene-5,6,7,8-tetrahydrofolate + H2O = 2-dehydropantoate + (6S)-5,6,7,8-tetrahydrofolate. It functions in the pathway cofactor biosynthesis; coenzyme A biosynthesis. In terms of biological role, catalyzes the reversible reaction in which hydroxymethyl group from 5,10-methylenetetrahydrofolate is transferred onto alpha-ketoisovalerate to form ketopantoate. The sequence is that of 3-methyl-2-oxobutanoate hydroxymethyltransferase from Aeropyrum pernix (strain ATCC 700893 / DSM 11879 / JCM 9820 / NBRC 100138 / K1).